The chain runs to 507 residues: Acetylcholine receptor subunit beta-type lev-1 (507 aa).

A signal peptide spans 1-31 (MMLGGGGGCGAGGTWLGFLVFLAVSLRNHST). Asn28, Asn58, and Asn109 each carry an N-linked (GlcNAc...) asparagine glycan. At 32-138 (CEDIDAEDRL…NNADGNYEVS (107 aa)) the chain is on the extracellular side. A helical transmembrane segment spans residues 139 to 159 (FMCNVLILSTGTVLWVPPAIY). A disulfide bridge links Cys163 with Cys177. A run of 3 helical transmembrane segments spans residues 243-263 (VVLILPTVLMAFLNVTVFYLP), 271-291 (GLTMNVLLSIVVFLLLVSKIL), and 305-325 (LLLTFVLNIITIMVTTIICNI). Residues 373–392 (GPSVEENPMRSGEHHPLCRH) form a disordered region. Basic and acidic residues predominate over residues 379 to 392 (NPMRSGEHHPLCRH). The chain crosses the membrane as a helical span at residues 454 to 474 (FLLYGFFGATVGGTIGIIFTA).

The protein belongs to the ligand-gated ion channel (TC 1.A.9) family. Acetylcholine receptor (TC 1.A.9.1) subfamily. As to quaternary structure, interacts with unc-29. Component of nicotinic acetylcholine receptor composed of 2 non-alpha subunits lev-1 and unc-29, and 3 alpha subunits unc-38, unc-63 and lev-8.

Its subcellular location is the postsynaptic cell membrane. The protein resides in the cell membrane. Its function is as follows. Non-alpha subunit of nicotinic acetylcholine receptor (nAChR). Involved in nAChR sensitivity to nicotine. The protein is Acetylcholine receptor subunit beta-type lev-1 (lev-1) of Caenorhabditis elegans.